The following is a 437-amino-acid chain: Enolase superfamily member DDB_G0284701 (437 aa).

The active-site Proton acceptor is the Lys217. Mn(2+) is bound by residues Asp251, Glu279, and Asp321. Asp395 (proton donor) is an active-site residue.

Belongs to the mandelate racemase/muconate lactonizing enzyme family.

The polypeptide is Enolase superfamily member DDB_G0284701 (Dictyostelium discoideum (Social amoeba)).